Consider the following 181-residue polypeptide: Ribulose bisphosphate carboxylase small subunit, chloroplastic 1 (181 aa).

The transit peptide at 1–57 (MASSIVSSAAVATRSNVAQASMVAPFTGLKSAASFPVTKKNNNVDITSLASNGGRVR) directs the protein to the chloroplast.

Belongs to the RuBisCO small chain family. In terms of assembly, heterohexadecamer of 8 large and 8 small subunits.

It localises to the plastid. The protein resides in the chloroplast. RuBisCO catalyzes two reactions: the carboxylation of D-ribulose 1,5-bisphosphate, the primary event in carbon dioxide fixation, as well as the oxidative fragmentation of the pentose substrate. Both reactions occur simultaneously and in competition at the same active site. Although the small subunit is not catalytic it is essential for maximal activity. This Solanum tuberosum (Potato) protein is Ribulose bisphosphate carboxylase small subunit, chloroplastic 1.